The following is a 2285-amino-acid chain: Protein Ycf2 (2285 aa).

ATP is bound at residue 1638-1645 (GSIGTGRS).

Belongs to the Ycf2 family.

The protein resides in the plastid. It is found in the chloroplast stroma. Functionally, probable ATPase of unknown function. Its presence in a non-photosynthetic plant (Epifagus virginiana) and experiments in tobacco indicate that it has an essential function which is probably not related to photosynthesis. This Populus trichocarpa (Western balsam poplar) protein is Protein Ycf2.